The following is a 324-amino-acid chain: Zinc metalloproteinase leucurolysin-B (324 aa).

Positions 1–119 (DTVLLNRISH…LNPQCILNEP (119 aa)) constitute a Peptidase M12B domain. Asp11 provides a ligand contact to Ca(2+). 3 disulfide bridges follow: Cys34–Cys114, Cys74–Cys98, and Cys76–Cys81. Residue His59 coordinates Zn(2+). Residue Glu60 is part of the active site. Zn(2+)-binding residues include His63 and His69. Asn97 carries an N-linked (GlcNAc...) asparagine glycan. Residues Cys114, Asn117, Val129, Asn132, Leu134, Glu136, Glu139, and Asp142 each coordinate Ca(2+). The Disintegrin domain maps to 127-213 (PPVCGNELLE…QCPTDDFKRN (87 aa)). Intrachain disulfides connect Cys130–Cys159, Cys141–Cys154, Cys143–Cys149, Cys153–Cys176, Cys167–Cys173, Cys172–Cys198, Cys185–Cys205, Cys192–Cys224, Cys217–Cys229, Cys236–Cys286, Cys251–Cys295, Cys264–Cys274, and Cys281–Cys315. The D/ECD-tripeptide motif lies at 191–193 (ECD). 2 N-linked (GlcNAc...) asparagine glycosylation sites follow: Asn296 and Asn305.

This sequence belongs to the venom metalloproteinase (M12B) family. P-III subfamily. P-IIIa sub-subfamily. Monomer. The cofactor is Zn(2+). Post-translationally, N-glycosylated. The N-terminus is blocked. Expressed by the venom gland.

It localises to the secreted. With respect to regulation, inhibited by EDTA, but not by PMSF. Pre-incubation with 2 mM DTT completely abolishes activity. Functionally, snake venom zinc metalloproteinase that acts as a potent hemorrhagic toxin. Hydrolyzes the insulin B chain at the 14-Ala-|-Leu-15 bond but not the 16-Tyr-|-Leu-17 bond. Degrades the alpha-chain of fibrin and hydrolyzes the Aalpha-chain of fibrinogen (FGA) while leaving the beta and gamma chains unaffected. Degrades type-I collagen and its gelatin. Degrades the alpha-1 chain of type-IV collagen and its gelatin but not the alpha-2 chain. Degrades plasma fibronectin, plasma vitronectin and basement membrane enactin. It inhibits collagen-induced platelet aggregation. This is Zinc metalloproteinase leucurolysin-B from Bothrops leucurus (Whitetail lancehead).